We begin with the raw amino-acid sequence, 39 residues long: Small basic protein 1 (39 aa).

Residue Gln-1 is modified to Pyrrolidone carboxylic acid. Cystine bridges form between Cys-6–Cys-32, Cys-10–Cys-26, and Cys-14–Cys-31.

The protein resides in the secreted. The polypeptide is Small basic protein 1 (Anas platyrhynchos (Mallard)).